The primary structure comprises 179 residues: Large ribosomal subunit protein uL5 (179 aa).

It belongs to the universal ribosomal protein uL5 family. As to quaternary structure, part of the 50S ribosomal subunit; part of the 5S rRNA/L5/L18/L25 subcomplex. Contacts the 5S rRNA and the P site tRNA. Forms a bridge to the 30S subunit in the 70S ribosome.

This is one of the proteins that bind and probably mediate the attachment of the 5S RNA into the large ribosomal subunit, where it forms part of the central protuberance. In the 70S ribosome it contacts protein S13 of the 30S subunit (bridge B1b), connecting the 2 subunits; this bridge is implicated in subunit movement. Contacts the P site tRNA; the 5S rRNA and some of its associated proteins might help stabilize positioning of ribosome-bound tRNAs. This chain is Large ribosomal subunit protein uL5, found in Citrifermentans bemidjiense (strain ATCC BAA-1014 / DSM 16622 / JCM 12645 / Bem) (Geobacter bemidjiensis).